The sequence spans 461 residues: uncharacterized protein (461 aa).

2 disordered regions span residues 254–273 (NNNNNNNNNNNNNNNNNNNN) and 368–414 (QPSQ…NNNS). Positions 381–413 (NNNNNNNNNNNNNNNNNNNNNNNNNNNNNNNNN) are enriched in low complexity.

This is an uncharacterized protein from Dictyostelium discoideum (Social amoeba).